We begin with the raw amino-acid sequence, 211 residues long: Thymidylate kinase (211 aa).

7-14 (GIDASGKS) serves as a coordination point for ATP.

The protein belongs to the thymidylate kinase family.

The enzyme catalyses dTMP + ATP = dTDP + ADP. Functionally, phosphorylation of dTMP to form dTDP in both de novo and salvage pathways of dTTP synthesis. The protein is Thymidylate kinase of Mesomycoplasma hyopneumoniae (strain 232) (Mycoplasma hyopneumoniae).